A 187-amino-acid polypeptide reads, in one-letter code: Guanylate kinase (187 aa).

One can recognise a Guanylate kinase-like domain in the interval G5 to Q183. G12–G19 is an ATP binding site.

Belongs to the guanylate kinase family.

It localises to the cytoplasm. The enzyme catalyses GMP + ATP = GDP + ADP. It carries out the reaction dZMP + ATP = dZDP + ADP. Its pathway is purine metabolism. Its function is as follows. Essential for recycling GMP and indirectly, cGMP. Functionally, (Microbial infection) Catalyzes the phosphorylation of dZMP to dZDP, when the bacterium is infected by a phage that produces the substrate for the synthesis of dZTP (2- amino-2'-deoxyadenosine 5'-triphosphate), which is then used by the phage as a DNA polymerase substrate. The chain is Guanylate kinase from Synechococcus sp. (strain CC9902).